The primary structure comprises 308 residues: Homogentisate phytyltransferase (308 aa).

8 helical membrane passes run Pro-13–Gly-33, Leu-44–Leu-64, Leu-104–Ile-124, Ala-142–Phe-162, Ile-173–Phe-193, Val-219–Ala-241, Leu-245–Trp-263, and Phe-279–Trp-299.

It belongs to the UbiA prenyltransferase family.

The protein resides in the membrane. The catalysed reaction is phytyl diphosphate + homogentisate + H(+) = 2-methyl-6-phytyl-1,4-benzene-1,4-diol + CO2 + diphosphate. Its pathway is cofactor biosynthesis; tocopherol biosynthesis. In terms of biological role, involved in the synthesis of tocopherol (vitamin E). Catalyzes the condensation of homogentisate and phytyl diphosphate to form dimethylphytylhydrquinone. This is Homogentisate phytyltransferase from Synechocystis sp. (strain ATCC 27184 / PCC 6803 / Kazusa).